A 336-amino-acid polypeptide reads, in one-letter code: MAMSDRLLAAWYHGHPALTLLRPLEWLYRRVVAGKRQRFLDGEGEIYQSPVPVIVVGNITVGGTGKTPMILWLIEHCRRHGLRVGVVSRGYGAKPAQLPWRVQADQTADIAGDEPLLIVQRTGVPLMIDPDRSAAVRALLDSEPLDLILSDDGMQHYRLARDLELVLIDAARGLGNRRCLPAGPLREPAERLQSVDGVLFNGALEDRDGGFAFRLKPSALVNLRSGERRPLDHFPPGQAVHAVAGIGNPQRFFNTLEALDWRPVPHAFADHAEYSVQALSFTPSLPVVMTEKDAVKCRAFAADDWWYLTVDAVPSPAFVAWFDTQLMRLLPDRLLP.

Residue 60-67 (TVGGTGKT) participates in ATP binding.

The protein belongs to the LpxK family.

It catalyses the reaction a lipid A disaccharide + ATP = a lipid IVA + ADP + H(+). It participates in glycolipid biosynthesis; lipid IV(A) biosynthesis; lipid IV(A) from (3R)-3-hydroxytetradecanoyl-[acyl-carrier-protein] and UDP-N-acetyl-alpha-D-glucosamine: step 6/6. Transfers the gamma-phosphate of ATP to the 4'-position of a tetraacyldisaccharide 1-phosphate intermediate (termed DS-1-P) to form tetraacyldisaccharide 1,4'-bis-phosphate (lipid IVA). This Pseudomonas fluorescens (strain Pf0-1) protein is Tetraacyldisaccharide 4'-kinase.